Here is an 87-residue protein sequence, read N- to C-terminus: U3-theraphotoxin-Hhn1a 3 (87 aa).

The first 24 residues, 1–24 (MVNMKASMFLTFAGLVLLFVVCYA), serve as a signal peptide directing secretion. A propeptide spanning residues 25–52 (PESEEKEFPKEMLSSIFAVDNDFKQEER) is cleaved from the precursor. 3 cysteine pairs are disulfide-bonded: C54–C67, C61–C72, and C66–C79.

The protein belongs to the neurotoxin 10 (Hwtx-1) family. 51 (Hntx-8) subfamily. Hntx-8 sub-subfamily. Expressed by the venom gland.

Its subcellular location is the secreted. Functionally, ion channel inhibitor. The sequence is that of U3-theraphotoxin-Hhn1a 3 from Cyriopagopus hainanus (Chinese bird spider).